A 105-amino-acid polypeptide reads, in one-letter code: UPF0235 protein A1C_06510 (105 aa).

Belongs to the UPF0235 family.

The protein is UPF0235 protein A1C_06510 of Rickettsia akari (strain Hartford).